The following is a 133-amino-acid chain: Cytochrome c-554 (133 aa).

At glutamine 1 the chain carries Pyrrolidone carboxylic acid. The heme c site is built by methionine 17, cysteine 122, cysteine 125, and histidine 126.

Binds 1 heme c group covalently per subunit.

It is found in the periplasm. Monoheme c-type cytochrome, that is particularly expressed when cells generate energy via aerobic respiration. The sequence is that of Cytochrome c-554 (cycF) from Cereibacter sphaeroides (Rhodobacter sphaeroides).